The primary structure comprises 4998 residues: SCO-spondin (4998 aa).

The signal sequence occupies residues 1–17; that stretch reads MLPLALLFGMLWTQANG. Positions 18-102 constitute an EMI domain; sequence HWCEQIETVH…ACCPGWGGAH (85 aa). A VWFD 1 domain is found at 72 to 241; it reads GLCAIYKPPE…KLPGSEPGCL (170 aa). 2 disulfides stabilise this stretch: C74–C202 and C103–C240. N88 and N130 each carry an N-linked (GlcNAc...) asparagine glycan. The region spanning 349-404 is the TIL 1 domain; that stretch reads CPGGQLYSDCVSSCPPSCSAVAQGEEGSCGKECVSGCECPTGLFWDGALCVPAAHC. The VWFC 1 domain maps to 404–496; the sequence is CPCYHRRQRY…HGACDTGSCL (93 aa). The region spanning 442–615 is the VWFD 2 domain; sequence AECAVGGDGH…FQVSGDGRCP (174 aa). Intrachain disulfides connect C444-C577 and C468-C614. N-linked (GlcNAc...) asparagine glycans are attached at residues N534 and N698. A TIL 2 domain is found at 706 to 759; the sequence is CPGGQVYQECAPVCGHHCGEPEDCKELGICVAGCNCPPGLLWDLEGQCVPPSMC. N771, N790, N824, and N866 each carry an N-linked (GlcNAc...) asparagine glycan. Residues 892–1062 form the VWFD 3 domain; that stretch reads GWCQASGAPH…HSWRLNPLCP (171 aa). 3 disulfide bridges follow: C894–C1026, C916–C1061, and C937–C944. Positions 1153 to 1209 constitute a TIL 3 domain; the sequence is CEGGQVYEPCGSTCPPTCHDHHSELRWHCQVITCVEGCFCPEGTLLHGGACMKLAAC. N1230 is a glycosylation site (N-linked (GlcNAc...) asparagine). LDL-receptor class A domains follow at residues 1253–1290, 1293–1328, 1329–1365, and 1369–1407; these read GCAE…EGCA, VCGE…EQGC, LCPH…ESCL, and SCIS…SHCS. Intrachain disulfides connect C1254/C1267, C1261/C1280, C1274/C1289, C1294/C1306, C1301/C1319, C1313/C1328, C1330/C1342, C1337/C1355, C1349/C1364, C1370/C1382, C1377/C1395, and C1389/C1406. The tract at residues 1406 to 1440 is disordered; that stretch reads CSLPSLPTPPGGIGQNPSTSSLDTAPSPVGSTSPA. Over residues 1420-1440 the composition is skewed to polar residues; it reads QNPSTSSLDTAPSPVGSTSPA. LDL-receptor class A domains lie at 1442-1478 and 1480-1519; these read PCSL…LDCG and PCML…DVCE. Disulfide bonds link C1443/C1455, C1450/C1468, C1462/C1477, C1481/C1494, C1488/C1507, and C1501/C1518. N1528 carries an N-linked (GlcNAc...) asparagine glycan. In terms of domain architecture, LDL-receptor class A 7 spans 1533 to 1571; it reads PCPEFSCPDGTCIDFLLVCDGNPDCELADETEPSLDEQG. 9 disulfides stabilise this stretch: C1534–C1544, C1539–C1557, C1551–C1572, C1584–C1620, C1588–C1625, C1599–C1610, C1640–C1680, C1644–C1685, and C1654–C1664. TSP type-1 domains lie at 1572–1626 and 1628–1686; these read CGAW…EACP and DGEW…EGCL. N-linked (GlcNAc...) asparagine glycosylation is present at N1598. N-linked (GlcNAc...) asparagine glycosylation occurs at N1687. The region spanning 1692–1746 is the TIL 4 domain; the sequence is GELVFRTCAPCPLTCDDISGQAACPPDRPCSSPGCWCPDGKVLNTEGQCVRPRQC. EGF-like domains follow at residues 1702 to 1741 and 1742 to 1768; these read CPLT…GQCV and RPRQ…CQLC. Residues 1771–1827 enclose the TSP type-1 3 domain; that stretch reads DCGWSSWSPWAECLGPCSSQSLQWSFRSPNNPRLSGHGRQCRGIHRKARRCQTEACE. 3 disulfide bridges follow: C1772/C1811, C1783/C1787, and C1821/C1826. The VWFC 2 domain occupies 1827–1887; sequence EGCEQWGLMY…GMGESCCHCA (61 aa). N-linked (GlcNAc...) asparagine glycosylation is found at N1892 and N1989. Positions 1929-2085 constitute an F5/8 type C domain; that stretch reads CYSPLGLAGL…IFLWVELLGL (157 aa). Residues 2091 to 2127 enclose the LDL-receptor class A 8 domain; it reads LCPGSRHRCASGECAPKGGPCDGAVDCDDGSDEEGCG. 3 disulfides stabilise this stretch: C2092–C2104, C2099–C2117, and C2111–C2126. The disordered stretch occupies residues 2119-2209; sequence DGSDEEGCGS…TFPPGAKSLH (91 aa). A compositionally biased stretch (polar residues) spans 2130–2144; that stretch reads HASTTSRTPALSPTQ. A compositionally biased stretch (basic and acidic residues) spans 2148–2158; sequence FPREVSEDLRQ. Polar residues-rich tracts occupy residues 2164–2173 and 2190–2201; these read TSHSPPSSGE and QPMQTLSATSTF. 2 LDL-receptor class A domains span residues 2242–2278 and 2299–2335; these read PCGP…QHCA and LCSP…DNCV. Disulfide bonds link C2243–C2255, C2250–C2268, C2262–C2277, C2300–C2312, C2307–C2325, C2319–C2334, C2337–C2373, C2348–C2352, C2383–C2388, C2403–C2440, C2407–C2445, and C2418–C2430. TSP type-1 domains lie at 2336–2389 and 2391–2446; these read DCVL…QACP and AGAW…QLCP. Residues 2468–2511 enclose the TIL 5 domain; that stretch reads VPPCPPSCLDPEANRSCSGHCMEGCRCPPGLLLQDSHCLPLSEC. 2 N-linked (GlcNAc...) asparagine glycosylation sites follow: N2481 and N2530. TSP type-1 domains are found at residues 2551–2605, 2609–2664, and 2666–2719; these read SCGW…TDCG, PGWT…PVCP, and PSAW…HPCT. Cystine bridges form between C2552–C2590, C2563–C2567, C2600–C2604, C2620–C2658, C2624–C2663, C2640–C2648, C2678–C2713, C2682–C2718, and C2693–C2703. Residues N2772 and N2802 are each glycosylated (N-linked (GlcNAc...) asparagine). 2 consecutive TSP type-1 domains span residues 2820–2875 and 2876–2919; these read ACGW…RPCR and GPGA…QPCA. 3 cysteine pairs are disulfide-bonded: C2821–C2859, C2832–C2836, and C2869–C2874. 4 N-linked (GlcNAc...) asparagine glycosylation sites follow: N2897, N2952, N2999, and N3009. Residues 2926–2978 enclose the TIL 6 domain; it reads CPEDQQWLDCAQGPASCAHLSIPGEANQTCHPGCYCLSGMLLLNNVCVPVQDC. TSP type-1 domains are found at residues 3019–3086 and 3088–3143; these read QPAW…PGCN and AGGW…QPCP. Disulfide bonds link C3031/C3080, C3035/C3085, C3046/C3070, C3100/C3137, C3104/C3142, and C3115/C3127. N-linked (GlcNAc...) asparagine glycosylation occurs at N3146. The region spanning 3151–3201 is the TIL 7 domain; it reads EGAEYSPCGPPCPRSCDDLVHCVWRCQPGCYCPLGKVLSADGAICVKPSYC. An N-linked (GlcNAc...) asparagine glycan is attached at N3235. TSP type-1 domains lie at 3244–3306 and 3308–3363; these read SGDW…TACP and DGAW…TLCT. 6 disulfide bridges follow: C3256–C3299, C3260–C3305, C3271–C3283, C3320–C3355, C3323–C3362, and C3333–C3345. N-linked (GlcNAc...) asparagine glycosylation occurs at N3301. N-linked (GlcNAc...) asparagine glycosylation is present at N3357. In terms of domain architecture, TIL 8 spans 3365–3421; the sequence is CGGGQDLLPCGQPCPHSCQDLSLGSTCQPGSAGCQSGCGCPPGQLSQDGLCVFPVDC. N-linked (GlcNAc...) asparagine glycans are attached at residues N3435 and N3462. The 49-residue stretch at 3481 to 3529 folds into the TSP type-1 15 domain; that stretch reads PGIWSSWGPWEKCSVSCGGGEQLRSRQCARPPCPGLAQQSRICHIHVCR. 3 disulfide bridges follow: C3493–C3523, C3497–C3528, and C3508–C3513. N-linked (GlcNAc...) asparagine glycosylation occurs at N3638. TSP type-1 domains lie at 3657-3713, 3727-3779, 3793-3849, and 3851-3906; these read HGSF…PECP, AGGW…PSCA, NCFW…RACP, and PGGW…MPCE. Cystine bridges form between C3669-C3707, C3673-C3712, and C3685-C3697. Residue N3761 is glycosylated (N-linked (GlcNAc...) asparagine). Cystine bridges form between C3794–C3830, C3805–C3809, C3843–C3848, C3863–C3900, C3867–C3905, and C3878–C3890. Positions 3909–3964 constitute a TIL 9 domain; the sequence is CPAGMEMVSCANHCPYSCSDLQEGGMCQEDQACQLGCRCSEGFLEQDGGCVPVGHC. The N-linked (GlcNAc...) asparagine glycan is linked to N3986. TSP type-1 domains follow at residues 4006–4059, 4100–4155, 4157–4213, and 4215–4269; these read HCAW…VPCP, PRGW…QLCL, KLER…GPCQ, and DCTW…GNCS. 12 cysteine pairs are disulfide-bonded: C4007–C4043, C4018–C4022, C4053–C4058, C4112–C4149, C4116–C4154, C4127–C4139, C4169–C4207, C4173–C4212, C4184–C4195, C4216–C4253, C4227–C4229, and C4263–C4268. N4196 carries N-linked (GlcNAc...) asparagine glycosylation. N4267 carries N-linked (GlcNAc...) asparagine glycosylation. In terms of domain architecture, TIL 10 spans 4273–4328; that stretch reads CPPPFEFQSCGSPCAGLCATHLNHRLCQDLPPCQPGCYCPKGLLEQAGSCILPEQC. Residues N4408 and N4463 are each glycosylated (N-linked (GlcNAc...) asparagine). The region spanning 4465–4516 is the TSP type-1 24 domain; sequence TCQWGPWGPWSPCQMPCSGGFKLRWRVARDTSAGECPGPWAQTESCNMGSCP. Disulfide bonds link C4466–C4500, C4477–C4481, and C4510–C4515. The TIL 11 domain occupies 4530–4576; sequence DCANQCPRSCADLWDGVQCLQGPCSPGCRCPPGQLVQDGHCVPISSC. 3 N-linked (GlcNAc...) asparagine glycosylation sites follow: N4584, N4601, and N4606. Residues 4616–4669 form the TSP type-1 25 domain; that stretch reads CPVLGPWSAWSECSAVCGKGTMVRHRSCEEHPDREPCQALDLQQWQECNLQACP. Disulfide bonds link C4628/C4663, C4632/C4668, and C4643/C4652. The TIL 12 domain occupies 4671-4725; sequence CPPGQVLSTCATMCPSLCSHLWPGTICVREPCQLGCGCPGGQLLYNGTCIPPEAC. N4716, N4756, N4799, and N4806 each carry an N-linked (GlcNAc...) asparagine glycan. The TIL 13 domain occupies 4777 to 4835; that stretch reads CAPGEIWQHGKLGPCEKTCPEMNMTQAWSNCTEAQAPGCVCQLGYFRSQTGLCVPEDHC. In terms of domain architecture, VWFC 3 spans 4835–4893; it reads CECWHHGSPHLPGSEWQEACESCRCLHGKSVCIRHCPELSCAQGEVIMQEPGSCCPICQ. 4 disulfides stabilise this stretch: C4892-C4952, C4918-C4969, C4928-C4985, and C4932-C4987. The 100-residue stretch at 4892-4991 folds into the CTCK domain; the sequence is CQQDTLKEEP…IHSCQCSACQ (100 aa). A glycan (N-linked (GlcNAc...) asparagine) is linked at N4912.

It belongs to the thrombospondin family. Subcommissural organ.

The protein resides in the secreted. The protein localises to the extracellular space. Its function is as follows. Involved in the modulation of neuronal aggregation. May be involved in developmental events during the formation of the central nervous system. This chain is SCO-spondin, found in Mus musculus (Mouse).